A 731-amino-acid chain; its full sequence is Alpha-catulin (731 aa).

A phosphoserine mark is found at Ser373 and Ser537. Residues 535–559 are disordered; it reads HLSLPKPTKNSANLKSLKPDKPDSE.

It belongs to the vinculin/alpha-catenin family. As to quaternary structure, interacts with ARHGEF1. Interacts with Dtna. The interaction is required for correct localization of both Ctnnal1 and Dtna.

The protein localises to the cytoplasm. The protein resides in the cytoskeleton. It is found in the cell membrane. Functionally, may modulate the Rho pathway signaling by providing a scaffold for the Lbc Rho guanine nucleotide exchange factor (ARHGEF1). This is Alpha-catulin (Ctnnal1) from Mus musculus (Mouse).